The chain runs to 332 residues: Succinylglutamate desuccinylase (332 aa).

Residues H59, E62, and H151 each coordinate Zn(2+). E215 is an active-site residue.

Belongs to the AspA/AstE family. Succinylglutamate desuccinylase subfamily. Zn(2+) is required as a cofactor.

It catalyses the reaction N-succinyl-L-glutamate + H2O = L-glutamate + succinate. It functions in the pathway amino-acid degradation; L-arginine degradation via AST pathway; L-glutamate and succinate from L-arginine: step 5/5. Its function is as follows. Transforms N(2)-succinylglutamate into succinate and glutamate. This Pseudomonas aeruginosa (strain UCBPP-PA14) protein is Succinylglutamate desuccinylase.